Reading from the N-terminus, the 521-residue chain is Glutamate--tRNA ligase (521 aa).

The short motif at 30–40 (PSPTGYLHVGG) is the 'HIGH' region element. A 'KMSKS' region motif is present at residues 277–281 (KLSKR). Lysine 280 is a binding site for ATP.

The protein belongs to the class-I aminoacyl-tRNA synthetase family. Glutamate--tRNA ligase type 1 subfamily. Monomer.

It is found in the cytoplasm. The enzyme catalyses tRNA(Glu) + L-glutamate + ATP = L-glutamyl-tRNA(Glu) + AMP + diphosphate. Functionally, catalyzes the attachment of glutamate to tRNA(Glu) in a two-step reaction: glutamate is first activated by ATP to form Glu-AMP and then transferred to the acceptor end of tRNA(Glu). This is Glutamate--tRNA ligase from Chlorobium phaeovibrioides (strain DSM 265 / 1930) (Prosthecochloris vibrioformis (strain DSM 265)).